A 671-amino-acid polypeptide reads, in one-letter code: Pescadillo homolog (671 aa).

A BRCT domain is found at 317-403 (KVRELFRGLT…LMLPVTGYRI (87 aa)). A coiled-coil region spans residues 548–584 (QALRKAQEKSRQTETSEARLQRKMSEVKRQEAATRKM). Disordered stretches follow at residues 552 to 578 (KAQEKSRQTETSEARLQRKMSEVKRQE) and 643 to 671 (RRQRAEAKSKKLKERKAGNPYKKLPKWVQ).

This sequence belongs to the pescadillo family.

The protein resides in the nucleus. The protein localises to the nucleolus. It localises to the nucleoplasm. Required for maturation of ribosomal RNAs and formation of the large ribosomal subunit. The chain is Pescadillo homolog from Leishmania infantum.